The sequence spans 89 residues: Small ribosomal subunit protein uS15 (89 aa).

The protein belongs to the universal ribosomal protein uS15 family. As to quaternary structure, part of the 30S ribosomal subunit. Forms a bridge to the 50S subunit in the 70S ribosome, contacting the 23S rRNA.

One of the primary rRNA binding proteins, it binds directly to 16S rRNA where it helps nucleate assembly of the platform of the 30S subunit by binding and bridging several RNA helices of the 16S rRNA. Functionally, forms an intersubunit bridge (bridge B4) with the 23S rRNA of the 50S subunit in the ribosome. This is Small ribosomal subunit protein uS15 from Bartonella henselae (strain ATCC 49882 / DSM 28221 / CCUG 30454 / Houston 1) (Rochalimaea henselae).